The sequence spans 277 residues: Shikimate dehydrogenase (NADP(+)) (277 aa).

Residues 18-20 and Thr-65 each bind shikimate; that span reads SKS. Lys-69 serves as the catalytic Proton acceptor. Glu-81 lines the NADP(+) pocket. The shikimate site is built by Asn-90 and Asp-106. NADP(+) is bound by residues 130-134, 154-159, and Met-217; these read GAGGA and NRTFSK. Tyr-219 contributes to the shikimate binding site. Position 241 (Gly-241) interacts with NADP(+).

It belongs to the shikimate dehydrogenase family. As to quaternary structure, homodimer.

It catalyses the reaction shikimate + NADP(+) = 3-dehydroshikimate + NADPH + H(+). It participates in metabolic intermediate biosynthesis; chorismate biosynthesis; chorismate from D-erythrose 4-phosphate and phosphoenolpyruvate: step 4/7. Involved in the biosynthesis of the chorismate, which leads to the biosynthesis of aromatic amino acids. Catalyzes the reversible NADPH linked reduction of 3-dehydroshikimate (DHSA) to yield shikimate (SA). The polypeptide is Shikimate dehydrogenase (NADP(+)) (Vibrio parahaemolyticus serotype O3:K6 (strain RIMD 2210633)).